The chain runs to 117 residues: Ubiquitin-like protein 3 (117 aa).

Residues 10-88 (INLRLILVSG…PFGKTTVMHL (79 aa)) enclose the Ubiquitin-like domain. Cysteine 113 carries S-palmitoyl cysteine lipidation. Residue cysteine 114 is modified to Cysteine methyl ester. A lipid anchor (S-geranylgeranyl cysteine) is attached at cysteine 114. Positions 115-117 (VIL) are cleaved as a propeptide — removed in mature form.

It localises to the cell membrane. This chain is Ubiquitin-like protein 3 (UBL3), found in Bos taurus (Bovine).